A 357-amino-acid chain; its full sequence is Homoserine O-succinyltransferase (357 aa).

Cys-146 serves as the catalytic Acyl-thioester intermediate. 2 residues coordinate substrate: Lys-167 and Ser-196. His-239 acts as the Proton acceptor in catalysis. Glu-241 is a catalytic residue. Arg-253 lines the substrate pocket.

This sequence belongs to the MetA family.

It is found in the cytoplasm. It carries out the reaction L-homoserine + succinyl-CoA = O-succinyl-L-homoserine + CoA. Its pathway is amino-acid biosynthesis; L-methionine biosynthesis via de novo pathway; O-succinyl-L-homoserine from L-homoserine: step 1/1. Functionally, transfers a succinyl group from succinyl-CoA to L-homoserine, forming succinyl-L-homoserine. The protein is Homoserine O-succinyltransferase of Allochromatium vinosum (strain ATCC 17899 / DSM 180 / NBRC 103801 / NCIMB 10441 / D) (Chromatium vinosum).